The following is a 295-amino-acid chain: Ribosomal RNA small subunit methyltransferase A (295 aa).

S-adenosyl-L-methionine is bound by residues asparagine 33, valine 35, glycine 60, glutamate 81, aspartate 111, and asparagine 129.

The protein belongs to the class I-like SAM-binding methyltransferase superfamily. rRNA adenine N(6)-methyltransferase family. RsmA subfamily.

Its subcellular location is the cytoplasm. It carries out the reaction adenosine(1518)/adenosine(1519) in 16S rRNA + 4 S-adenosyl-L-methionine = N(6)-dimethyladenosine(1518)/N(6)-dimethyladenosine(1519) in 16S rRNA + 4 S-adenosyl-L-homocysteine + 4 H(+). Functionally, specifically dimethylates two adjacent adenosines (A1518 and A1519) in the loop of a conserved hairpin near the 3'-end of 16S rRNA in the 30S particle. May play a critical role in biogenesis of 30S subunits. This is Ribosomal RNA small subunit methyltransferase A from Streptomyces avermitilis (strain ATCC 31267 / DSM 46492 / JCM 5070 / NBRC 14893 / NCIMB 12804 / NRRL 8165 / MA-4680).